Here is a 485-residue protein sequence, read N- to C-terminus: CUGBP Elav-like family member 5 (485 aa).

A compositionally biased stretch (basic and acidic residues) spans Met-1 to Arg-11. The disordered stretch occupies residues Met-1–Lys-40. Low complexity predominate over residues Gln-12–Gly-28. RRM domains follow at residues Ile-45–Ser-126, Arg-134–Thr-214, and Cys-400–Pro-478.

The protein belongs to the CELF/BRUNOL family. As to expression, expressed in brain.

It localises to the nucleus. The protein resides in the cytoplasm. Functionally, RNA-binding protein implicated in the regulation of pre-mRNA alternative splicing. Mediates exon inclusion and/or exclusion in pre-mRNA that are subject to tissue-specific and developmentally regulated alternative splicing. Specifically activates exon 5 inclusion of cardiac isoforms of TNNT2 during heart remodeling at the juvenile to adult transition. Binds to muscle-specific splicing enhancer (MSE) intronic sites flanking the alternative exon 5 of TNNT2 pre-mRNA. The polypeptide is CUGBP Elav-like family member 5 (CELF5) (Homo sapiens (Human)).